The sequence spans 102 residues: NADH-quinone oxidoreductase subunit K 2 (102 aa).

3 consecutive transmembrane segments (helical) span residues Ile-4 to Val-24, Ile-30 to Ala-50, and Ile-62 to Leu-82.

Belongs to the complex I subunit 4L family. As to quaternary structure, NDH-1 is composed of 14 different subunits. Subunits NuoA, H, J, K, L, M, N constitute the membrane sector of the complex.

It localises to the cell inner membrane. It catalyses the reaction a quinone + NADH + 5 H(+)(in) = a quinol + NAD(+) + 4 H(+)(out). In terms of biological role, NDH-1 shuttles electrons from NADH, via FMN and iron-sulfur (Fe-S) centers, to quinones in the respiratory chain. The immediate electron acceptor for the enzyme in this species is believed to be ubiquinone. Couples the redox reaction to proton translocation (for every two electrons transferred, four hydrogen ions are translocated across the cytoplasmic membrane), and thus conserves the redox energy in a proton gradient. The chain is NADH-quinone oxidoreductase subunit K 2 from Solibacter usitatus (strain Ellin6076).